The following is a 202-amino-acid chain: Dephospho-CoA kinase (202 aa).

Residues 6–202 form the DPCK domain; the sequence is KISVTGDPSS…QCFKALKGTI (197 aa). Position 14–19 (14–19) interacts with ATP; the sequence is SSGKTE.

The protein belongs to the CoaE family.

Its subcellular location is the cytoplasm. The catalysed reaction is 3'-dephospho-CoA + ATP = ADP + CoA + H(+). Its pathway is cofactor biosynthesis; coenzyme A biosynthesis; CoA from (R)-pantothenate: step 5/5. Its function is as follows. Catalyzes the phosphorylation of the 3'-hydroxyl group of dephosphocoenzyme A to form coenzyme A. This is Dephospho-CoA kinase from Chlamydia trachomatis serovar A (strain ATCC VR-571B / DSM 19440 / HAR-13).